The primary structure comprises 444 residues: ATP-dependent protease ATPase subunit HslU (444 aa).

ATP contacts are provided by residues I18, 60 to 65, D256, E322, and R394; that span reads GVGKTE.

Belongs to the ClpX chaperone family. HslU subfamily. In terms of assembly, a double ring-shaped homohexamer of HslV is capped on each side by a ring-shaped HslU homohexamer. The assembly of the HslU/HslV complex is dependent on binding of ATP.

It is found in the cytoplasm. In terms of biological role, ATPase subunit of a proteasome-like degradation complex; this subunit has chaperone activity. The binding of ATP and its subsequent hydrolysis by HslU are essential for unfolding of protein substrates subsequently hydrolyzed by HslV. HslU recognizes the N-terminal part of its protein substrates and unfolds these before they are guided to HslV for hydrolysis. The protein is ATP-dependent protease ATPase subunit HslU of Klebsiella pneumoniae subsp. pneumoniae (strain ATCC 700721 / MGH 78578).